Consider the following 207-residue polypeptide: MKLRGLYAITDSQLLAGRFLSHVEAALEGGVCLLQYRDKTDDAARRLREAEGLMKLCERYGTQLLINDDAELAARLGVGVHLGQTDGPLTPARALLGRQAIIGSTCHASLELAAQAASEGASYVAFGRFFNSVTKPGAPAANVGLLEQARAQVKLPIAVIGGITLDNAAPLVAHGADLLAVIHGLFGADSAQEVTRRARAFNALFAS.

Residues 35–39 and asparagine 67 each bind 4-amino-2-methyl-5-(diphosphooxymethyl)pyrimidine; that span reads QYRDK. Aspartate 68 and aspartate 86 together coordinate Mg(2+). Threonine 105 contacts 4-amino-2-methyl-5-(diphosphooxymethyl)pyrimidine. 132–134 provides a ligand contact to 2-[(2R,5Z)-2-carboxy-4-methylthiazol-5(2H)-ylidene]ethyl phosphate; sequence SVT. A 4-amino-2-methyl-5-(diphosphooxymethyl)pyrimidine-binding site is contributed by lysine 135. Glycine 162 serves as a coordination point for 2-[(2R,5Z)-2-carboxy-4-methylthiazol-5(2H)-ylidene]ethyl phosphate.

The protein belongs to the thiamine-phosphate synthase family. Mg(2+) is required as a cofactor.

The enzyme catalyses 2-[(2R,5Z)-2-carboxy-4-methylthiazol-5(2H)-ylidene]ethyl phosphate + 4-amino-2-methyl-5-(diphosphooxymethyl)pyrimidine + 2 H(+) = thiamine phosphate + CO2 + diphosphate. It catalyses the reaction 2-(2-carboxy-4-methylthiazol-5-yl)ethyl phosphate + 4-amino-2-methyl-5-(diphosphooxymethyl)pyrimidine + 2 H(+) = thiamine phosphate + CO2 + diphosphate. The catalysed reaction is 4-methyl-5-(2-phosphooxyethyl)-thiazole + 4-amino-2-methyl-5-(diphosphooxymethyl)pyrimidine + H(+) = thiamine phosphate + diphosphate. The protein operates within cofactor biosynthesis; thiamine diphosphate biosynthesis; thiamine phosphate from 4-amino-2-methyl-5-diphosphomethylpyrimidine and 4-methyl-5-(2-phosphoethyl)-thiazole: step 1/1. Its function is as follows. Condenses 4-methyl-5-(beta-hydroxyethyl)thiazole monophosphate (THZ-P) and 2-methyl-4-amino-5-hydroxymethyl pyrimidine pyrophosphate (HMP-PP) to form thiamine monophosphate (TMP). This chain is Thiamine-phosphate synthase, found in Pseudomonas putida (strain ATCC 47054 / DSM 6125 / CFBP 8728 / NCIMB 11950 / KT2440).